A 379-amino-acid polypeptide reads, in one-letter code: Cytochrome b (379 aa).

4 helical membrane passes run 33–53 (FGSL…FLAM), 77–98 (WLIR…YLHI), 113–133 (WNIG…GYVL), and 178–198 (FFAF…LHLL). His-83 and His-97 together coordinate heme b. Heme b is bound by residues His-182 and His-196. A ubiquinone is bound at residue His-201. The next 4 helical transmembrane spans lie at 226-246 (YKDL…ALFY), 288-308 (LGGV…PILH), 320-340 (ASQL…WIGG), and 347-367 (YIII…VLNP).

It belongs to the cytochrome b family. In terms of assembly, the cytochrome bc1 complex contains 3 respiratory subunits (MT-CYB, CYC1 and UQCRFS1), 2 core proteins (UQCRC1 and UQCRC2) and probably 6 low-molecular weight proteins. Requires heme b as cofactor.

Its subcellular location is the mitochondrion inner membrane. Its function is as follows. Component of the ubiquinol-cytochrome c reductase complex (complex III or cytochrome b-c1 complex) that is part of the mitochondrial respiratory chain. The b-c1 complex mediates electron transfer from ubiquinol to cytochrome c. Contributes to the generation of a proton gradient across the mitochondrial membrane that is then used for ATP synthesis. This Anguilla anguilla (European freshwater eel) protein is Cytochrome b (mt-cyb).